The chain runs to 494 residues: Sulfate adenylyltransferase subunit 1 (494 aa).

The tr-type G domain occupies 24–240; the sequence is TRPLRLITCG…LELATVRSAQ (217 aa). The segment at 33 to 40 is G1; that stretch reads GSVDDGKS. 33-40 is a binding site for GTP; it reads GSVDDGKS. The G2 stretch occupies residues 91–95; that stretch reads GITID. The interval 112–115 is G3; sequence DTPG. GTP-binding positions include 112–116 and 167–170; these read DTPGH and NKID. Residues 167 to 170 form a G4 region; it reads NKID. Residues 204-206 form a G5 region; that stretch reads SAL.

Belongs to the TRAFAC class translation factor GTPase superfamily. Classic translation factor GTPase family. CysN/NodQ subfamily. Heterodimer composed of CysD, the smaller subunit, and CysN.

It catalyses the reaction sulfate + ATP + H(+) = adenosine 5'-phosphosulfate + diphosphate. It functions in the pathway sulfur metabolism; hydrogen sulfide biosynthesis; sulfite from sulfate: step 1/3. In terms of biological role, with CysD forms the ATP sulfurylase (ATPS) that catalyzes the adenylation of sulfate producing adenosine 5'-phosphosulfate (APS) and diphosphate, the first enzymatic step in sulfur assimilation pathway. APS synthesis involves the formation of a high-energy phosphoric-sulfuric acid anhydride bond driven by GTP hydrolysis by CysN coupled to ATP hydrolysis by CysD. This chain is Sulfate adenylyltransferase subunit 1, found in Rhizobium rhizogenes (strain K84 / ATCC BAA-868) (Agrobacterium radiobacter).